A 279-amino-acid polypeptide reads, in one-letter code: 4-diphosphocytidyl-2-C-methyl-D-erythritol kinase (279 aa).

Lys9 is an active-site residue. 93-103 (PMGAGLGGGSS) contacts ATP. The active site involves Asp135.

This sequence belongs to the GHMP kinase family. IspE subfamily.

It catalyses the reaction 4-CDP-2-C-methyl-D-erythritol + ATP = 4-CDP-2-C-methyl-D-erythritol 2-phosphate + ADP + H(+). The protein operates within isoprenoid biosynthesis; isopentenyl diphosphate biosynthesis via DXP pathway; isopentenyl diphosphate from 1-deoxy-D-xylulose 5-phosphate: step 3/6. Its function is as follows. Catalyzes the phosphorylation of the position 2 hydroxy group of 4-diphosphocytidyl-2C-methyl-D-erythritol. The protein is 4-diphosphocytidyl-2-C-methyl-D-erythritol kinase of Acinetobacter baylyi (strain ATCC 33305 / BD413 / ADP1).